A 384-amino-acid chain; its full sequence is N-acetyldiaminopimelate deacetylase (384 aa).

Aspartate 74 is a catalytic residue. Catalysis depends on glutamate 133, which acts as the Proton acceptor.

Belongs to the peptidase M20A family. N-acetyldiaminopimelate deacetylase subfamily.

It catalyses the reaction N-acetyl-(2S,6S)-2,6-diaminopimelate + H2O = (2S,6S)-2,6-diaminopimelate + acetate. Its pathway is amino-acid biosynthesis; L-lysine biosynthesis via DAP pathway; LL-2,6-diaminopimelate from (S)-tetrahydrodipicolinate (acetylase route): step 3/3. In terms of biological role, catalyzes the conversion of N-acetyl-diaminopimelate to diaminopimelate and acetate. The sequence is that of N-acetyldiaminopimelate deacetylase from Leuconostoc mesenteroides subsp. mesenteroides (strain ATCC 8293 / DSM 20343 / BCRC 11652 / CCM 1803 / JCM 6124 / NCDO 523 / NBRC 100496 / NCIMB 8023 / NCTC 12954 / NRRL B-1118 / 37Y).